The primary structure comprises 234 residues: Uridylate kinase (234 aa).

Residue 9 to 12 (KLSG) participates in ATP binding. Position 51 (Gly-51) interacts with UMP. Positions 52 and 56 each coordinate ATP. UMP-binding positions include Asp-71 and 132 to 139 (CGNPFFTT). Residues Thr-159, Tyr-165, and Asp-168 each coordinate ATP.

It belongs to the UMP kinase family. Homohexamer.

It localises to the cytoplasm. It carries out the reaction UMP + ATP = UDP + ADP. It functions in the pathway pyrimidine metabolism; CTP biosynthesis via de novo pathway; UDP from UMP (UMPK route): step 1/1. Its activity is regulated as follows. Inhibited by UTP. Functionally, catalyzes the reversible phosphorylation of UMP to UDP. The chain is Uridylate kinase from Prochlorococcus marinus subsp. pastoris (strain CCMP1986 / NIES-2087 / MED4).